A 349-amino-acid chain; its full sequence is Anthranilate phosphoribosyltransferase (349 aa).

Residues Gly-82, 85–86, 92–95, 110–118, and Ser-122 each bind 5-phospho-alpha-D-ribose 1-diphosphate; these read GD, NVST, and KHGNRAVSG. Residue Gly-82 participates in anthranilate binding. Residue Ser-94 coordinates Mg(2+). Residue Asn-113 coordinates anthranilate. Residue Arg-168 participates in anthranilate binding. Residues Asp-227 and Glu-228 each contribute to the Mg(2+) site.

The protein belongs to the anthranilate phosphoribosyltransferase family. As to quaternary structure, homodimer. Mg(2+) is required as a cofactor.

It catalyses the reaction N-(5-phospho-beta-D-ribosyl)anthranilate + diphosphate = 5-phospho-alpha-D-ribose 1-diphosphate + anthranilate. It participates in amino-acid biosynthesis; L-tryptophan biosynthesis; L-tryptophan from chorismate: step 2/5. Catalyzes the transfer of the phosphoribosyl group of 5-phosphorylribose-1-pyrophosphate (PRPP) to anthranilate to yield N-(5'-phosphoribosyl)-anthranilate (PRA). The polypeptide is Anthranilate phosphoribosyltransferase (Pseudomonas putida (strain ATCC 700007 / DSM 6899 / JCM 31910 / BCRC 17059 / LMG 24140 / F1)).